Reading from the N-terminus, the 287-residue chain is Agamous-like MADS-box protein AGL53 (287 aa).

In terms of domain architecture, MADS-box spans 30-78 (STAKKTTNLSMREQTMFKKALELSTLCNIDVCVIYYGRDGKLIKTWPED). The tract at residues 151-171 (EFGQTRAVSSTTNPLSPPPSL) is disordered.

As to quaternary structure, interacts with MEE14/CBP1.

The protein resides in the nucleus. In terms of biological role, probable transcription factor that may function in the maintenance of the proper function of the central cell in pollen tube attraction. The chain is Agamous-like MADS-box protein AGL53 from Arabidopsis thaliana (Mouse-ear cress).